Consider the following 585-residue polypeptide: Squalene epoxidase 2, mitochondrial (585 aa).

Residues 1 to 45 (MKPFVIRNLPRFQSTLRSSLLYTNHRPSSRFSLSTRRFTTGATYI) constitute a mitochondrion transit peptide. A helical membrane pass occupies residues 70–90 (AKIALDQFIASLFTFLLLYIL). FAD contacts are provided by residues 132 to 133 (VA), 152 to 153 (ER), Arg160, Arg231, Val247, Asp409, and Met422. 3 helical membrane-spanning segments follow: residues 493-513 (FDYL…LSGL), 520-540 (LVLH…LPFP), and 545-565 (FWLG…IIKA).

Belongs to the squalene monooxygenase family. The cofactor is FAD. In terms of tissue distribution, expressed mainly in inflorescences. Detected in seedlings, leaves, stems, and siliques.

It localises to the mitochondrion membrane. The enzyme catalyses squalene + reduced [NADPH--hemoprotein reductase] + O2 = (S)-2,3-epoxysqualene + oxidized [NADPH--hemoprotein reductase] + H2O + H(+). It participates in terpene metabolism; lanosterol biosynthesis; lanosterol from farnesyl diphosphate: step 2/3. Its function is as follows. Catalyzes the stereospecific oxidation of squalene to (S)-2,3-epoxysqualene, and is considered to be a rate-limiting enzyme in steroid biosynthesis. Produces primarily oxidosqualene. The polypeptide is Squalene epoxidase 2, mitochondrial (SQE2) (Arabidopsis thaliana (Mouse-ear cress)).